A 418-amino-acid polypeptide reads, in one-letter code: Voltage-gated ClC-type chloride channel ClcB (418 aa).

The next 10 helical transmembrane spans lie at 5-25, 54-74, 146-166, 168-188, 222-242, 260-280, 291-311, 316-336, 352-372, and 380-400; these read LLIA…FRHA, LLTP…WQKF, LWIA…PLAG, LFIA…PVII, ALII…LTLM, LALG…VWGN, APPL…AVLA, GAPG…GMLY, LLLG…APIM, and MTGE…ASVI.

It belongs to the chloride channel (TC 2.A.49) family. ClcB subfamily.

Its subcellular location is the cell inner membrane. Functionally, probably acts as an electrical shunt for an outwardly-directed proton pump that is linked to amino acid decarboxylation, as part of the extreme acid resistance (XAR) response. The protein is Voltage-gated ClC-type chloride channel ClcB of Escherichia coli O9:H4 (strain HS).